A 338-amino-acid polypeptide reads, in one-letter code: Ketol-acid reductoisomerase (NADP(+)) (338 aa).

The region spanning 1-181 (MKVFYDKDAD…GGGRAGIIET (181 aa)) is the KARI N-terminal Rossmann domain. NADP(+) is bound by residues 24-27 (YGSQ), Arg-47, and Ser-52. His-107 is a catalytic residue. Gly-133 provides a ligand contact to NADP(+). Residues 182–327 (NFREETETDL…EKLRAMMPWI (146 aa)) enclose the KARI C-terminal knotted domain. Mg(2+)-binding residues include Asp-190, Glu-194, Glu-226, and Glu-230. Residue Ser-251 coordinates substrate.

This sequence belongs to the ketol-acid reductoisomerase family. Mg(2+) serves as cofactor.

The enzyme catalyses (2R)-2,3-dihydroxy-3-methylbutanoate + NADP(+) = (2S)-2-acetolactate + NADPH + H(+). It catalyses the reaction (2R,3R)-2,3-dihydroxy-3-methylpentanoate + NADP(+) = (S)-2-ethyl-2-hydroxy-3-oxobutanoate + NADPH + H(+). It participates in amino-acid biosynthesis; L-isoleucine biosynthesis; L-isoleucine from 2-oxobutanoate: step 2/4. The protein operates within amino-acid biosynthesis; L-valine biosynthesis; L-valine from pyruvate: step 2/4. Its function is as follows. Involved in the biosynthesis of branched-chain amino acids (BCAA). Catalyzes an alkyl-migration followed by a ketol-acid reduction of (S)-2-acetolactate (S2AL) to yield (R)-2,3-dihydroxy-isovalerate. In the isomerase reaction, S2AL is rearranged via a Mg-dependent methyl migration to produce 3-hydroxy-3-methyl-2-ketobutyrate (HMKB). In the reductase reaction, this 2-ketoacid undergoes a metal-dependent reduction by NADPH to yield (R)-2,3-dihydroxy-isovalerate. This chain is Ketol-acid reductoisomerase (NADP(+)), found in Cupriavidus taiwanensis (strain DSM 17343 / BCRC 17206 / CCUG 44338 / CIP 107171 / LMG 19424 / R1) (Ralstonia taiwanensis (strain LMG 19424)).